We begin with the raw amino-acid sequence, 200 residues long: Lipopolysaccharide core heptose(II)-phosphate phosphatase (200 aa).

An N-terminal signal peptide occupies residues 1-25; sequence MLAFCRSSLKSKKYIIILLALAAIA.

Belongs to the phosphoglycerate mutase family. Ais subfamily.

It localises to the periplasm. It functions in the pathway bacterial outer membrane biogenesis; lipopolysaccharide metabolism. Its function is as follows. Catalyzes the dephosphorylation of heptose(II) of the outer membrane lipopolysaccharide core. This is Lipopolysaccharide core heptose(II)-phosphate phosphatase from Escherichia coli (strain ATCC 8739 / DSM 1576 / NBRC 3972 / NCIMB 8545 / WDCM 00012 / Crooks).